A 981-amino-acid chain; its full sequence is RNA polymerase II assembly factor RTP1 (981 aa).

HEAT repeat units follow at residues 64-101 (SNNN…LLPI), 161-199 (DTLS…ILLG), 226-261 (YTLF…RRPE), 366-403 (KELN…TTPG), 609-646 (KDVL…GEET), 655-692 (SSYK…KLQS), 765-799 (ISLE…LCEL), 800-836 (EPET…NYIQ), and 945-980 (EYNY…VLDS). Residues 630-651 (QEVEADSDDEVEEGEETEELDP) show a composition bias toward acidic residues. The disordered stretch occupies residues 630-652 (QEVEADSDDEVEEGEETEELDPN).

The protein belongs to the Tango6 family. In terms of assembly, interacts with RNA polymerase II subunits RPB2 and RPB3. Interacts with the R2TP complex. Interacts with the nuclear pore complex subunits NUP100 and NUP116.

Its subcellular location is the cytoplasm. Functionally, required for the cytoplasmic assembly and the nuclear import of RNA polymerase II. May facilitate the starting interaction between RNA polymerase II subunits RPB2 and RPB3 and the subsequent interaction of the resulting complex with subunit RPB1. May also participate in the transport of RNA polymerase II through the nuclear pore complex. The sequence is that of RNA polymerase II assembly factor RTP1 from Saccharomyces cerevisiae (strain ATCC 204508 / S288c) (Baker's yeast).